Here is a 655-residue protein sequence, read N- to C-terminus: Protein npp-24 (655 aa).

Residues 263-283 (ICSVFVLVSGGGVLSHLVVFP) form a helical membrane-spanning segment.

It is found in the membrane. The chain is Protein npp-24 from Caenorhabditis elegans.